The following is a 355-amino-acid chain: Elongation factor Ts (355 aa).

Residues threonine 82 to valine 85 form an involved in Mg(2+) ion dislocation from EF-Tu region.

The protein belongs to the EF-Ts family.

It is found in the cytoplasm. Associates with the EF-Tu.GDP complex and induces the exchange of GDP to GTP. It remains bound to the aminoacyl-tRNA.EF-Tu.GTP complex up to the GTP hydrolysis stage on the ribosome. The sequence is that of Elongation factor Ts from Helicobacter pylori (strain HPAG1).